The primary structure comprises 224 residues: MKTCAILCAAGKGTRFGGNTPKQFLFLKNKMIIEYSLEVFEKSHFIDGIVLLVPQGFEDIARYLKDKFSKVIFWDYGGNERADTVKRGLEILKGECDIVAIHDSARPFITLELLEKLIADVETHFAVAPGILANDTVKFVVDGHIQNTLPRSNICLIQTPQVFKFDLIYRGYEMFKNELFTDDLQYVERLGIKPKIIENSRINFKITTKEDLLIAEAIVEKGYW.

It belongs to the IspD/TarI cytidylyltransferase family. IspD subfamily.

It carries out the reaction 2-C-methyl-D-erythritol 4-phosphate + CTP + H(+) = 4-CDP-2-C-methyl-D-erythritol + diphosphate. It functions in the pathway isoprenoid biosynthesis; isopentenyl diphosphate biosynthesis via DXP pathway; isopentenyl diphosphate from 1-deoxy-D-xylulose 5-phosphate: step 2/6. In terms of biological role, catalyzes the formation of 4-diphosphocytidyl-2-C-methyl-D-erythritol from CTP and 2-C-methyl-D-erythritol 4-phosphate (MEP). The chain is 2-C-methyl-D-erythritol 4-phosphate cytidylyltransferase from Caldicellulosiruptor bescii (strain ATCC BAA-1888 / DSM 6725 / KCTC 15123 / Z-1320) (Anaerocellum thermophilum).